Reading from the N-terminus, the 137-residue chain is Histone H3-like 2 (137 aa).

Positions 1 to 36 are disordered; that stretch reads MARTKQTARKSTGGKGPRKELATKAARKTRRPYRGG. N6,N6,N6-trimethyllysine; alternate occurs at positions 5 and 10. 2 positions are modified to N6,N6-dimethyllysine; alternate: Lys5 and Lys10. N6-methyllysine; alternate is present on residues Lys5 and Lys10. An N6-acetyllysine; alternate modification is found at Lys10. Ser11 is subject to Phosphoserine. Thr12 carries the phosphothreonine modification. Position 15 is an N6-acetyllysine (Lys15). Residues Lys19, Lys24, Lys28, and Lys38 each carry the N6-methyllysine; alternate modification. An N6-acetyllysine; alternate mark is found at Lys19 and Lys24. A compositionally biased stretch (basic residues) spans 25-36; that stretch reads AARKTRRPYRGG. Residues Lys28 and Lys38 each carry the N6,N6,N6-trimethyllysine; alternate modification. 2 positions are modified to N6,N6-dimethyllysine; alternate: Lys28 and Lys38.

This sequence belongs to the histone H3 family. In terms of assembly, the nucleosome is a histone octamer containing two molecules each of H2A, H2B, H3 and H4 assembled in one H3-H4 heterotetramer and two H2A-H2B heterodimers. The octamer wraps approximately 147 bp of DNA. As to expression, pollen specific.

The protein localises to the nucleus. It localises to the chromosome. Its function is as follows. Core component of nucleosome. Nucleosomes wrap and compact DNA into chromatin, limiting DNA accessibility to the cellular machineries which require DNA as a template. Histones thereby play a central role in transcription regulation, DNA repair, DNA replication and chromosomal stability. DNA accessibility is regulated via a complex set of post-translational modifications of histones, also called histone code, and nucleosome remodeling. This chain is Histone H3-like 2 (MGH3), found in Arabidopsis thaliana (Mouse-ear cress).